The chain runs to 767 residues: 5-methyltetrahydropteroyltriglutamate--homocysteine methyltransferase (767 aa).

Residues 17–20 and lysine 117 each bind 5-methyltetrahydropteroyltri-L-glutamate; that span reads RELK. L-homocysteine contacts are provided by residues 441-443 and glutamate 494; that span reads IGS. L-methionine-binding positions include 441 to 443 and glutamate 494; that span reads IGS. Residues 525 to 526 and tryptophan 571 each bind 5-methyltetrahydropteroyltri-L-glutamate; that span reads RC. Residue aspartate 609 participates in L-homocysteine binding. Residue aspartate 609 participates in L-methionine binding. Residue glutamate 615 coordinates 5-methyltetrahydropteroyltri-L-glutamate. Zn(2+)-binding residues include histidine 652, cysteine 654, and glutamate 676. Residue histidine 705 is the Proton donor of the active site. Cysteine 737 provides a ligand contact to Zn(2+).

It belongs to the vitamin-B12 independent methionine synthase family. The cofactor is Zn(2+).

It carries out the reaction 5-methyltetrahydropteroyltri-L-glutamate + L-homocysteine = tetrahydropteroyltri-L-glutamate + L-methionine. It functions in the pathway amino-acid biosynthesis; L-methionine biosynthesis via de novo pathway; L-methionine from L-homocysteine (MetE route): step 1/1. In terms of biological role, catalyzes the transfer of a methyl group from 5-methyltetrahydrofolate to homocysteine resulting in methionine formation. This chain is 5-methyltetrahydropteroyltriglutamate--homocysteine methyltransferase, found in Bifidobacterium longum (strain NCC 2705).